Consider the following 344-residue polypeptide: tRNA N6-adenosine threonylcarbamoyltransferase (344 aa).

2 residues coordinate Fe cation: histidine 112 and histidine 116. Residues 135–139, aspartate 168, glycine 181, and asparagine 271 contribute to the substrate site; that span reads LVSGG. A Fe cation-binding site is contributed by aspartate 299. Residues 323–344 form a disordered region; it reads RARPRWPLDPEAEPVRGAGVKA.

Belongs to the KAE1 / TsaD family. Fe(2+) serves as cofactor.

Its subcellular location is the cytoplasm. The catalysed reaction is L-threonylcarbamoyladenylate + adenosine(37) in tRNA = N(6)-L-threonylcarbamoyladenosine(37) in tRNA + AMP + H(+). In terms of biological role, required for the formation of a threonylcarbamoyl group on adenosine at position 37 (t(6)A37) in tRNAs that read codons beginning with adenine. Is involved in the transfer of the threonylcarbamoyl moiety of threonylcarbamoyl-AMP (TC-AMP) to the N6 group of A37, together with TsaE and TsaB. TsaD likely plays a direct catalytic role in this reaction. This is tRNA N6-adenosine threonylcarbamoyltransferase from Erythrobacter litoralis (strain HTCC2594).